Here is a 263-residue protein sequence, read N- to C-terminus: Indole-3-glycerol phosphate synthase (263 aa).

It belongs to the TrpC family.

It catalyses the reaction 1-(2-carboxyphenylamino)-1-deoxy-D-ribulose 5-phosphate + H(+) = (1S,2R)-1-C-(indol-3-yl)glycerol 3-phosphate + CO2 + H2O. Its pathway is amino-acid biosynthesis; L-tryptophan biosynthesis; L-tryptophan from chorismate: step 4/5. The chain is Indole-3-glycerol phosphate synthase from Aliarcobacter butzleri (strain RM4018) (Arcobacter butzleri).